The primary structure comprises 1369 residues: MSTGDSFETRFEKIDNLLRDPKSEVNSDCLLDGLDALVYDLDFPALRKNKNIDNFLSRYKDTINKIRDLRMKAEDYEVVKVIGRGAFGEVQLVRHKSTRKVYAMKLLSKFEMIKRSDSAFFWEERDIMAFANSPWVVQLFYAFQDDRYLYMVMEYMPGGDLVNLMSNYDVPEKWARFYTAEVVLALDAIHSMGFIHRDVKPDNMLLDKSGHLKLADFGTCMKMNKEGMVRCDTAVGTPDYISPEVLKSQGGDGYYGRECDWWSVGVFLYEMLVGDTPFYADSLVGTYSKIMNHKNSLTFPDDNDISKEAKNLICAFLTDREVRLGRNGVEEIKRHLFFKNDQWAWETLRDTVAPVVPDLSSDIDTSNFDDLEEDKGDEETFPIPKAFVGNQLPFVGFTYYSNRRYLPSANPSENRSSSNVDKNVQESLQKTIYKLEEQLHNEMQLKDEMEQKCRTSNIKLDKIMKELDEEGNQRRNLESAVSQIEKEKMLLQHRINEYQRKVEQENEKRRNVENEVSTLKDQLEDLRKASQSSQLANEKLTQLQKQLEEANDLLRTESDTAVRLRKSHTEMSKSVSQLESLNRELQERNRMLENSKSQADKDYYQLQAVLEAERRDRGHDSEMIGDLQARITSLQEEVKHLKHNLERVEGERKEAQDMLNHSEKEKNNLEIDLNYKLKSIQQRLEQEVNEHKVTKARLTDKHQSIEEAKSVAMCEMEKKLKEEREAREKAENRVVETEKQCSMLDVDLKQSQQKLEHLTENKERLEDAVKSLTLQLEQESNKRILLQSELKTQAFEADNLKGLEKQMKQEINTLLEAKRLLEFELAQLTKQYRGNEGQMRELQDQLEAEQYFSTLYKTQVKELKEEIEEKNRENLRKIQELQSEKETLSTQLDLAETKAESEQLARGILEEQYFELTQESKKAASRNRQEITDKDHTVSRLEEANNALTKDIELLRKENEELNERMRTAEEEYKLKKEEEISNLKAAFEKNISTERTLKTQAVNKLAEIMNRKDFKIDRKKANTQDLRKKEKENRKLQLELNQEREKFNQMVVKHQKELNDMQAQLVEECTHRNELQMQLASKESDIEQLRAKLLDLSDSTSVASFPSADETDGNLPVGSACIPYLFIFYSSSSRIEGWLSVPNRGNIKRYGWKKQYVVVSSKKMLFYNDEQDKEQSSPSMVLDIDKLFHVRPVTQGDVYRAETEEIPKIFQILYANEGECRKDIEVEPVQQGEKTNFQNHKGHEFIPTLYHFPANCEACAKPLWHVFKPPPALECRRCHVKSHRDHLDKKEDLIPPCKVSYDVTSARDMLLLACPQDEQKKWVTHLVKKIPKKAPSGFVRASPRTLSTRSTANQSFRKVVKNTSGKTS.

Ser-2 bears the N-acetylserine mark. One can recognise a Protein kinase domain in the interval 76–338; sequence YEVVKVIGRG…VEEIKRHLFF (263 aa). ATP contacts are provided by residues 82–90 and Lys-105; that span reads IGRGAFGEV. Residue Asp-198 is the Proton acceptor of the active site. Positions 341-409 constitute an AGC-kinase C-terminal domain; that stretch reads DQWAWETLRD…YSNRRYLPSA (69 aa). An interaction with FHOD1 region spans residues 368-727; that stretch reads FDDLEEDKGD…KKLKEEREAR (360 aa). Positions 422–692 form a coiled coil; sequence KNVQESLQKT…RLEQEVNEHK (271 aa). The REM-1 domain occupies 479-556; the sequence is SAVSQIEKEK…LEEANDLLRT (78 aa). Residues 707–946 are SHROOM3 binding; the sequence is EAKSVAMCEM…TVSRLEEANN (240 aa). Residues 949 to 1015 enclose the RhoBD domain; it reads TKDIELLRKE…LAEIMNRKDF (67 aa). Positions 998-1010 are RHOA binding; sequence LKTQAVNKLAEIM. Residues 1011–1102 adopt a coiled-coil conformation; that stretch reads NRKDFKIDRK…KLLDLSDSTS (92 aa). 2 positions are modified to phosphoserine: Ser-1105 and Ser-1108. Residues 1115 to 1369 are auto-inhibitory; the sequence is NLPVGSACIP…VVKNTSGKTS (255 aa). The 200-residue stretch at 1133 to 1332 folds into the PH domain; it reads SSRIEGWLSV…WVTHLVKKIP (200 aa). Residues 1243–1298 form a Phorbol-ester/DAG-type zinc finger; that stretch reads GHEFIPTLYHFPANCEACAKPLWHVFKPPPALECRRCHVKSHRDHLDKKEDLIPPC. Ser-1343 is modified (phosphoserine).

This sequence belongs to the protein kinase superfamily. AGC Ser/Thr protein kinase family. As to quaternary structure, homodimer. Interacts with GEM, MYLC2B, RHOE, LIMK1, LIMK2, TSG101, CHORDC1, DAPK3, PFN1, PTEN and JIP3. Interacts with FHOD1 in a Src-dependent manner. Interacts with ITGB1BP1 (via N-terminus and PTB domain). Interacts with RHOA (activated by GTP), RHOB, RHOC and PPP1R12A. Interacts with SHROOM3. It depends on Mg(2+) as a cofactor. Autophosphorylated on serine and threonine residues. In terms of processing, cleaved by caspase-3 during apoptosis. This leads to constitutive activation of the kinase and membrane blebbing. In terms of tissue distribution, highly expressed in brain, spleen, lung, liver, skeletal muscle, kidney and testis.

The protein localises to the cytoplasm. It is found in the cytoskeleton. The protein resides in the microtubule organizing center. It localises to the centrosome. Its subcellular location is the centriole. The protein localises to the golgi apparatus membrane. It is found in the cell projection. The protein resides in the bleb. It localises to the cell membrane. Its subcellular location is the lamellipodium. The protein localises to the ruffle. The enzyme catalyses L-seryl-[protein] + ATP = O-phospho-L-seryl-[protein] + ADP + H(+). It carries out the reaction L-threonyl-[protein] + ATP = O-phospho-L-threonyl-[protein] + ADP + H(+). With respect to regulation, activated by RHOA binding. Inhibited by Y-27632. In terms of biological role, protein kinase which is a key regulator of the actin cytoskeleton and cell polarity. Involved in regulation of smooth muscle contraction, actin cytoskeleton organization, stress fiber and focal adhesion formation, neurite retraction, cell adhesion and motility via phosphorylation of DAPK3, GFAP, LIMK1, LIMK2, MYL9/MLC2, TPPP, PFN1 and PPP1R12A. Phosphorylates FHOD1 and acts synergistically with it to promote SRC-dependent non-apoptotic plasma membrane blebbing. Phosphorylates JIP3 and regulates the recruitment of JNK to JIP3 upon UVB-induced stress. Acts as a suppressor of inflammatory cell migration by regulating PTEN phosphorylation and stability. Acts as a negative regulator of VEGF-induced angiogenic endothelial cell activation. Required for centrosome positioning and centrosome-dependent exit from mitosis. Plays a role in terminal erythroid differentiation. Inhibits podocyte motility via regulation of actin cytoskeletal dynamics and phosphorylation of CFL1. Promotes keratinocyte terminal differentiation. Involved in osteoblast compaction through the fibronectin fibrillogenesis cell-mediated matrix assembly process, essential for osteoblast mineralization. May regulate closure of the eyelids and ventral body wall by inducing the assembly of actomyosin bundles. This chain is Rho-associated protein kinase 1 (Rock1), found in Rattus norvegicus (Rat).